A 418-amino-acid chain; its full sequence is MKSFVSVPQNSDFPIQNLPYGVFSTKADSSRHIGVAIGDQILNLAEIANLFDGPQLKAHQDVFKQSTLNAFMALPRPAWLEARARIQQLLSEDCAVLRDNAHLRSRALVAQSDATMHLPAQIGDYTDFYSSIHHATNVGIMFRGKENALMPNWKWLPVGYHGRASSIVVSGTDLKRPVGQTKAPDAEVPSFGPSKLMDFELEMAFFVGGPENELGTRVPIEKAEDRIFGVVLMNDWSARDIQAWEYVPLGPFLAKSFATTVSPWVVSIEALRPYFVENPVQDPVPPAYLHHDDPFTLDINLAVSIRPEGDAVDHIVCKTNFKHLYWTLKQQLAHHTVNGCNLRAGDLLGSGTVSGPEEGAYGSMLELSWRGAKEVPVGSEIRKFLKDGDEVNLSGVCEKNGVRIGFGECRGKVLPADI.

Residue Asp127 coordinates Ca(2+). His134 functions as the Proton acceptor in the catalytic mechanism. Ca(2+) contacts are provided by Glu200, Glu202, and Asp235. The Mg(2+) site is built by Asp235, Lys255, and Thr259.

Belongs to the FAH family. Ca(2+) serves as cofactor. It depends on Mg(2+) as a cofactor. In terms of tissue distribution, highly expressed in the intestine and the hypodermis.

It catalyses the reaction 4-fumarylacetoacetate + H2O = acetoacetate + fumarate + H(+). It participates in amino-acid degradation; L-phenylalanine degradation; acetoacetate and fumarate from L-phenylalanine: step 6/6. In terms of biological role, fumarylacetoacetase involved in the tyrosine degradation pathway. This is Fumarylacetoacetase from Caenorhabditis elegans.